Reading from the N-terminus, the 419-residue chain is Putative zinc metalloprotease spr0242 (419 aa).

Histidine 18 serves as a coordination point for Zn(2+). Residue glutamate 19 is part of the active site. Histidine 22 lines the Zn(2+) pocket. A run of 3 helical transmembrane segments spans residues leucine 169–isoleucine 191, isoleucine 345–leucine 367, and glutamate 388–tryptophan 410.

Belongs to the peptidase M50B family. Requires Zn(2+) as cofactor.

It is found in the cell membrane. The chain is Putative zinc metalloprotease spr0242 from Streptococcus pneumoniae (strain ATCC BAA-255 / R6).